A 200-amino-acid polypeptide reads, in one-letter code: Peptidyl-tRNA hydrolase (200 aa).

Tyr15 is a binding site for tRNA. The Proton acceptor role is filled by His20. TRNA contacts are provided by Tyr66, Asn68, and Asn114.

The protein belongs to the PTH family. In terms of assembly, monomer.

The protein localises to the cytoplasm. The enzyme catalyses an N-acyl-L-alpha-aminoacyl-tRNA + H2O = an N-acyl-L-amino acid + a tRNA + H(+). Functionally, hydrolyzes ribosome-free peptidyl-tRNAs (with 1 or more amino acids incorporated), which drop off the ribosome during protein synthesis, or as a result of ribosome stalling. Its function is as follows. Catalyzes the release of premature peptidyl moieties from peptidyl-tRNA molecules trapped in stalled 50S ribosomal subunits, and thus maintains levels of free tRNAs and 50S ribosomes. The chain is Peptidyl-tRNA hydrolase from Paraburkholderia xenovorans (strain LB400).